The sequence spans 84 residues: U2-theraphotoxin-Cg1b 2 (84 aa).

An N-terminal signal peptide occupies residues methionine 1 to alanine 21. Residues glutamate 22 to glutamate 48 constitute a propeptide that is removed on maturation. Disulfide bonds link cysteine 49-cysteine 63, cysteine 56-cysteine 68, and cysteine 62-cysteine 76.

Belongs to the neurotoxin 10 (Hwtx-1) family. 06 (F4b) subfamily. In terms of tissue distribution, expressed by the venom gland.

It localises to the secreted. In terms of biological role, probable ion channel inhibitor. In Chilobrachys guangxiensis (Chinese earth tiger tarantula), this protein is U2-theraphotoxin-Cg1b 2.